A 282-amino-acid chain; its full sequence is Shikimate dehydrogenase (NADP(+)) (282 aa).

Shikimate is bound by residues 15 to 17 (SKS) and Thr62. Lys66 acts as the Proton acceptor in catalysis. Residues Asn87 and Asp103 each coordinate shikimate. Residues 127-131 (GAGGA), 151-156 (NRTHTK), and Met220 contribute to the NADP(+) site. Residue Tyr222 participates in shikimate binding. Gly244 lines the NADP(+) pocket.

This sequence belongs to the shikimate dehydrogenase family. As to quaternary structure, homodimer.

The catalysed reaction is shikimate + NADP(+) = 3-dehydroshikimate + NADPH + H(+). Its pathway is metabolic intermediate biosynthesis; chorismate biosynthesis; chorismate from D-erythrose 4-phosphate and phosphoenolpyruvate: step 4/7. Its function is as follows. Involved in the biosynthesis of the chorismate, which leads to the biosynthesis of aromatic amino acids. Catalyzes the reversible NADPH linked reduction of 3-dehydroshikimate (DHSA) to yield shikimate (SA). The sequence is that of Shikimate dehydrogenase (NADP(+)) from Shewanella putrefaciens (strain CN-32 / ATCC BAA-453).